The primary structure comprises 156 residues: MPRKGPVAKRDVLPDPMYNSKLVTRLINKMMVDGKKGKSQTILYNAFDIVRERTGKEPMEVFEQALKNIMPVLEVRARRVGGANYQVPVEVRPERRTTLGLRWLVNYARLRGEKTMEERLANEILDAANNTGASVKKREDTHKMAEANKAFAHYRW.

This sequence belongs to the universal ribosomal protein uS7 family. In terms of assembly, part of the 30S ribosomal subunit. Contacts proteins S9 and S11.

Its function is as follows. One of the primary rRNA binding proteins, it binds directly to 16S rRNA where it nucleates assembly of the head domain of the 30S subunit. Is located at the subunit interface close to the decoding center, probably blocks exit of the E-site tRNA. The polypeptide is Small ribosomal subunit protein uS7 (Bacillus cytotoxicus (strain DSM 22905 / CIP 110041 / 391-98 / NVH 391-98)).